Reading from the N-terminus, the 20-residue chain is Hemocyanin subunit Ib (20 aa).

Residues 1-20 (DSVGSTTAHKQQNINHLLDK) form a disordered region.

It belongs to the tyrosinase family. Hemocyanin subfamily. In terms of assembly, composed of 3 major subunits (IB, II and III) and 1 minor subunit (IA) which form homohexamers and heterohexamers. May also form larger structures. As to expression, hemolymph.

Its subcellular location is the secreted. The protein resides in the extracellular space. Its function is as follows. Hemocyanins are copper-containing oxygen carriers occurring freely dissolved in the hemolymph of many mollusks and arthropods. The chain is Hemocyanin subunit Ib from Panulirus japonicus (Japanese spiny lobster).